The following is a 184-amino-acid chain: Ribosome-recycling factor (184 aa).

This sequence belongs to the RRF family.

It localises to the cytoplasm. In terms of biological role, responsible for the release of ribosomes from messenger RNA at the termination of protein biosynthesis. May increase the efficiency of translation by recycling ribosomes from one round of translation to another. This chain is Ribosome-recycling factor, found in Leptospira interrogans serogroup Icterohaemorrhagiae serovar copenhageni (strain Fiocruz L1-130).